Reading from the N-terminus, the 163-residue chain is 6,7-dimethyl-8-ribityllumazine synthase (163 aa).

Residues Phe-22, 56–58, and 80–82 contribute to the 5-amino-6-(D-ribitylamino)uracil site; these read TFE and AVI. Residue 85-86 coordinates (2S)-2-hydroxy-3-oxobutyl phosphate; sequence GT. His-88 serves as the catalytic Proton donor. Met-113 provides a ligand contact to 5-amino-6-(D-ribitylamino)uracil. Arg-127 serves as a coordination point for (2S)-2-hydroxy-3-oxobutyl phosphate.

Belongs to the DMRL synthase family.

It carries out the reaction (2S)-2-hydroxy-3-oxobutyl phosphate + 5-amino-6-(D-ribitylamino)uracil = 6,7-dimethyl-8-(1-D-ribityl)lumazine + phosphate + 2 H2O + H(+). The protein operates within cofactor biosynthesis; riboflavin biosynthesis; riboflavin from 2-hydroxy-3-oxobutyl phosphate and 5-amino-6-(D-ribitylamino)uracil: step 1/2. Functionally, catalyzes the formation of 6,7-dimethyl-8-ribityllumazine by condensation of 5-amino-6-(D-ribitylamino)uracil with 3,4-dihydroxy-2-butanone 4-phosphate. This is the penultimate step in the biosynthesis of riboflavin. The polypeptide is 6,7-dimethyl-8-ribityllumazine synthase (Anaeromyxobacter sp. (strain Fw109-5)).